Reading from the N-terminus, the 91-residue chain is Small ribosomal subunit protein uS15 (91 aa).

Belongs to the universal ribosomal protein uS15 family. Part of the 30S ribosomal subunit. Forms a bridge to the 50S subunit in the 70S ribosome, contacting the 23S rRNA.

In terms of biological role, one of the primary rRNA binding proteins, it binds directly to 16S rRNA where it helps nucleate assembly of the platform of the 30S subunit by binding and bridging several RNA helices of the 16S rRNA. Its function is as follows. Forms an intersubunit bridge (bridge B4) with the 23S rRNA of the 50S subunit in the ribosome. The chain is Small ribosomal subunit protein uS15 from Deinococcus radiodurans (strain ATCC 13939 / DSM 20539 / JCM 16871 / CCUG 27074 / LMG 4051 / NBRC 15346 / NCIMB 9279 / VKM B-1422 / R1).